Here is a 286-residue protein sequence, read N- to C-terminus: 5'-3' exonuclease (286 aa).

Positions isoleucine 172–lysine 270 constitute a 5'-3' exonuclease domain.

Functionally, 5'-3' exonuclease acting preferentially on double-stranded DNA. This is 5'-3' exonuclease from Buchnera aphidicola subsp. Acyrthosiphon pisum (strain APS) (Acyrthosiphon pisum symbiotic bacterium).